The following is a 345-amino-acid chain: Guanine nucleotide-binding protein alpha-4 subunit (345 aa).

A G-alpha domain is found at 30–345; it reads KDVKLLLLGP…TILSQALEHF (316 aa). Residues 33-46 form a G1 motif region; the sequence is KLLLLGPGESGKST. Residues 38-45, 171-177, 196-200, 265-268, and Ala-320 each bind GTP; these read GPGESGKS, LRCRVRT, DVGGQ, and NKKD. Mg(2+)-binding residues include Ser-45 and Thr-177. A G2 motif region spans residues 169–177; it reads DVLRCRVRT. Positions 192–201 are G3 motif; it reads LKIVDVGGQR. Positions 261 to 268 are G4 motif; sequence VLFLNKKD. The segment at 318 to 323 is G5 motif; sequence TCAVDT.

This sequence belongs to the G-alpha family. In terms of assembly, g proteins are composed of 3 units; alpha, beta and gamma. The alpha chain contains the guanine nucleotide binding site.

Its function is as follows. Guanine nucleotide-binding proteins (G proteins) are involved as modulators or transducers in various transmembrane signaling systems. G alpha-4 plays a role in morphogenesis of the multicellular structure. This is Guanine nucleotide-binding protein alpha-4 subunit (gpaD) from Dictyostelium discoideum (Social amoeba).